A 250-amino-acid polypeptide reads, in one-letter code: Probable xyloglucan-specific endo-beta-1,4-glucanase A (250 aa).

The signal sequence occupies residues 1–19 (MKLSVLSLASLASAAALNA). Asparagine 72 is a glycosylation site (N-linked (GlcNAc...) asparagine).

The protein belongs to the glycosyl hydrolase 12 (cellulase H) family.

It localises to the secreted. It carries out the reaction xyloglucan + H2O = xyloglucan oligosaccharides.. Its function is as follows. Catalyzes endohydrolysis of 1,4-beta-D-glucosidic linkages in xyloglucan with retention of the beta-configuration of the glycosyl residues. Specific for xyloglucan and does not hydrolyze other cell wall components. The polypeptide is Probable xyloglucan-specific endo-beta-1,4-glucanase A (xgeA) (Aspergillus terreus (strain NIH 2624 / FGSC A1156)).